The following is an 89-amino-acid chain: Small ribosomal subunit protein uS15 (89 aa).

It belongs to the universal ribosomal protein uS15 family. Part of the 30S ribosomal subunit. Forms a bridge to the 50S subunit in the 70S ribosome, contacting the 23S rRNA.

In terms of biological role, one of the primary rRNA binding proteins, it binds directly to 16S rRNA where it helps nucleate assembly of the platform of the 30S subunit by binding and bridging several RNA helices of the 16S rRNA. Its function is as follows. Forms an intersubunit bridge (bridge B4) with the 23S rRNA of the 50S subunit in the ribosome. The polypeptide is Small ribosomal subunit protein uS15 (Salinispora arenicola (strain CNS-205)).